Consider the following 551-residue polypeptide: Cytochrome c oxidase subunit 1 (551 aa).

The helical transmembrane segment at 34–54 (TLYLYSGVWGGLFGASLSLMI) threads the bilayer. G62 contacts Ca(2+). H79 is a binding site for Fe(II)-heme a. The next 6 helical transmembrane spans lie at 81 to 101 (LMMIFFAVMPILIEAFGNWLI), 126 to 146 (ALYLLMLSFSTDKGVGAGWTI), 163 to 183 (VLIVSLHLAGLSSLVGAINFA), 209 to 229 (TAVLLIISIPVLGGGITMILF), 252 to 272 (LFWFFGHPEVYILILPAFGVM), and 285 to 305 (VFGLIGMVYAMIGIGGLGCMV). Cu cation is bound at residue H258. The segment at residues 258-262 (HPEVY) is a cross-link (1'-histidyl-3'-tyrosine (His-Tyr)). Position 262 (Y262) interacts with O2. 2 residues coordinate Cu cation: H308 and H309. Transmembrane regions (helical) follow at residues 326 to 346 (ATMVIAVPTGVKVFSWLATMA) and 356 to 376 (AYWSTGFLFLFTVGGLTGVLL). Positions 386 and 387 each coordinate Mg(2+). 3 helical membrane passes run 391–411 (VVAHFHYVLSMGAVFGVFCGL), 432–452 (FMAMFFGVNTTFFPQHFLGLS), and 475–495 (GSAVSFGSLMYFKFLLWEALV). H394 serves as a coordination point for heme a3. H396 contacts Fe(II)-heme a.

The protein belongs to the heme-copper respiratory oxidase family. Component of the cytochrome c oxidase (complex IV, CIV), a multisubunit enzyme composed of a catalytic core of 3 subunits and several supernumerary subunits. The complex exists as a monomer or a dimer and forms supercomplexes (SCs) in the inner mitochondrial membrane with ubiquinol-cytochrome c oxidoreductase (cytochrome b-c1 complex, complex III, CIII). Heme serves as cofactor. Requires Cu cation as cofactor.

It is found in the mitochondrion inner membrane. It carries out the reaction 4 Fe(II)-[cytochrome c] + O2 + 8 H(+)(in) = 4 Fe(III)-[cytochrome c] + 2 H2O + 4 H(+)(out). It functions in the pathway energy metabolism; oxidative phosphorylation. Its function is as follows. Component of the cytochrome c oxidase, the last enzyme in the mitochondrial electron transport chain which drives oxidative phosphorylation. The respiratory chain contains 3 multisubunit complexes succinate dehydrogenase (complex II, CII), ubiquinol-cytochrome c oxidoreductase (cytochrome b-c1 complex, complex III, CIII) and cytochrome c oxidase (complex IV, CIV), that cooperate to transfer electrons derived from NADH and succinate to molecular oxygen, creating an electrochemical gradient over the inner membrane that drives transmembrane transport and the ATP synthase. Cytochrome c oxidase is the component of the respiratory chain that catalyzes the reduction of oxygen to water. Electrons originating from reduced cytochrome c in the intermembrane space (IMS) are transferred via the dinuclear copper A center (CU(A)) of subunit 2 and heme A of subunit 1 to the active site in subunit 1, a binuclear center (BNC) formed by heme A3 and copper B (CU(B)). The BNC reduces molecular oxygen to 2 water molecules using 4 electrons from cytochrome c in the IMS and 4 protons from the mitochondrial matrix. The sequence is that of Cytochrome c oxidase subunit 1 (COI) from Mytilus edulis (Blue mussel).